Consider the following 258-residue polypeptide: Phosphate import ATP-binding protein PstB 1 (258 aa).

In terms of domain architecture, ABC transporter spans Leu5–Lys247. Gly37 to Thr44 contacts ATP.

This sequence belongs to the ABC transporter superfamily. Phosphate importer (TC 3.A.1.7) family. In terms of assembly, the complex is composed of two ATP-binding proteins (PstB), two transmembrane proteins (PstC and PstA) and a solute-binding protein (PstS).

Its subcellular location is the cell membrane. The enzyme catalyses phosphate(out) + ATP + H2O = ADP + 2 phosphate(in) + H(+). Its function is as follows. Part of the ABC transporter complex PstSACB involved in phosphate import. Responsible for energy coupling to the transport system. In Mycobacterium bovis (strain ATCC BAA-935 / AF2122/97), this protein is Phosphate import ATP-binding protein PstB 1.